The sequence spans 135 residues: C-type lectin Cal (135 aa).

4 disulfide bridges follow: Cys-3-Cys-14, Cys-31-Cys-131, Cys-38-Cys-133, and Cys-106-Cys-123. A C-type lectin domain is found at 10–132 (MNGLCYKIFN…CESKDAFLCQ (123 aa)). Ca(2+) is bound by residues Gln-96, Asp-98, Glu-104, Asn-119, and Asp-120. The Galactose-binding motif lies at 96-98 (QPD).

Belongs to the true venom lectin family. Homodecamer of disulfide-linked dimers arranged in two pseudo-5-fold symmetric pentamers. In terms of tissue distribution, expressed by the venom gland.

It localises to the secreted. In terms of biological role, galactose-binding protein which recognizes specific carbohydrate structures and agglutinates a variety of animal cells by binding to cell-surface glycoproteins and glycolipids. Calcium-dependent lectin. Shows high hemagglutinating activity (MHC=10 ng/ml). The protein is C-type lectin Cal of Crotalus atrox (Western diamondback rattlesnake).